A 339-amino-acid polypeptide reads, in one-letter code: Sulfate/thiosulfate import ATP-binding protein CysA (339 aa).

Residues 3-237 (IAIRSVEKQF…PETAFVCGFV (235 aa)) form the ABC transporter domain. ATP is bound at residue 35 to 42 (GPSGSGKT).

This sequence belongs to the ABC transporter superfamily. Sulfate/tungstate importer (TC 3.A.1.6) family. As to quaternary structure, the complex is composed of two ATP-binding proteins (CysA), two transmembrane proteins (CysT and CysW) and a solute-binding protein (CysP).

It localises to the cell inner membrane. It carries out the reaction sulfate(out) + ATP + H2O = sulfate(in) + ADP + phosphate + H(+). It catalyses the reaction thiosulfate(out) + ATP + H2O = thiosulfate(in) + ADP + phosphate + H(+). Part of the ABC transporter complex CysAWTP involved in sulfate/thiosulfate import. Responsible for energy coupling to the transport system. The polypeptide is Sulfate/thiosulfate import ATP-binding protein CysA (Caulobacter vibrioides (strain ATCC 19089 / CIP 103742 / CB 15) (Caulobacter crescentus)).